Here is a 140-residue protein sequence, read N- to C-terminus: Large ribosomal subunit protein bL17 (140 aa).

Basic and acidic residues predominate over residues 119-133 (DPSAKGAADRARLEE). The disordered stretch occupies residues 119 to 140 (DPSAKGAADRARLEEEGGMTEE).

This sequence belongs to the bacterial ribosomal protein bL17 family. In terms of assembly, part of the 50S ribosomal subunit. Contacts protein L32.

This is Large ribosomal subunit protein bL17 from Maricaulis maris (strain MCS10) (Caulobacter maris).